Consider the following 427-residue polypeptide: 3-phosphoshikimate 1-carboxyvinyltransferase (427 aa).

Residues K20, S21, and R25 each contribute to the 3-phosphoshikimate site. K20 contributes to the phosphoenolpyruvate binding site. Residues G92 and R120 each contribute to the phosphoenolpyruvate site. 3-phosphoshikimate contacts are provided by S166, Q168, D312, and K339. Q168 serves as a coordination point for phosphoenolpyruvate. D312 functions as the Proton acceptor in the catalytic mechanism. The phosphoenolpyruvate site is built by R343 and R385.

This sequence belongs to the EPSP synthase family. As to quaternary structure, monomer.

It localises to the cytoplasm. The enzyme catalyses 3-phosphoshikimate + phosphoenolpyruvate = 5-O-(1-carboxyvinyl)-3-phosphoshikimate + phosphate. It functions in the pathway metabolic intermediate biosynthesis; chorismate biosynthesis; chorismate from D-erythrose 4-phosphate and phosphoenolpyruvate: step 6/7. Its function is as follows. Catalyzes the transfer of the enolpyruvyl moiety of phosphoenolpyruvate (PEP) to the 5-hydroxyl of shikimate-3-phosphate (S3P) to produce enolpyruvyl shikimate-3-phosphate and inorganic phosphate. The chain is 3-phosphoshikimate 1-carboxyvinyltransferase from Streptococcus mutans serotype c (strain ATCC 700610 / UA159).